The primary structure comprises 298 residues: Acetylglutamate kinase (298 aa).

Residues 69-70, Arg91, and Asn196 each bind substrate; that span reads GG.

The protein belongs to the acetylglutamate kinase family. ArgB subfamily.

The protein resides in the cytoplasm. It catalyses the reaction N-acetyl-L-glutamate + ATP = N-acetyl-L-glutamyl 5-phosphate + ADP. It participates in amino-acid biosynthesis; L-arginine biosynthesis; N(2)-acetyl-L-ornithine from L-glutamate: step 2/4. In terms of biological role, catalyzes the ATP-dependent phosphorylation of N-acetyl-L-glutamate. This is Acetylglutamate kinase from Rhodopseudomonas palustris (strain BisB5).